The chain runs to 308 residues: Probable pyridoxal 5'-phosphate synthase subunit pdx-1 (308 aa).

Asp30 contributes to the D-ribose 5-phosphate binding site. Lys87 serves as the catalytic Schiff-base intermediate with D-ribose 5-phosphate. A D-ribose 5-phosphate-binding site is contributed by Gly159. Arg171 contacts D-glyceraldehyde 3-phosphate. D-ribose 5-phosphate-binding positions include Gly224 and 245–246 (GS).

It belongs to the PdxS/SNZ family.

The enzyme catalyses aldehydo-D-ribose 5-phosphate + D-glyceraldehyde 3-phosphate + L-glutamine = pyridoxal 5'-phosphate + L-glutamate + phosphate + 3 H2O + H(+). The protein operates within cofactor biosynthesis; pyridoxal 5'-phosphate biosynthesis. In terms of biological role, catalyzes the formation of pyridoxal 5'-phosphate from ribose 5-phosphate (RBP), glyceraldehyde 3-phosphate (G3P) and ammonia. The ammonia is provided by pdx-2. Can also use ribulose 5-phosphate and dihydroxyacetone phosphate as substrates, resulting from enzyme-catalyzed isomerization of RBP and G3P, respectively. Also plays an indirect role in resistance to singlet oxygen-generating photosensitizers. The polypeptide is Probable pyridoxal 5'-phosphate synthase subunit pdx-1 (pdx-1) (Neurospora crassa (strain ATCC 24698 / 74-OR23-1A / CBS 708.71 / DSM 1257 / FGSC 987)).